The primary structure comprises 354 residues: Cellular communication network factor 6 (354 aa).

The first 23 residues, 1–23, serve as a signal peptide directing secretion; the sequence is MQGLLFSTLLLAGLAQFCCRVQG. The region spanning 44–117 is the IGFBP N-terminal domain; that stretch reads RKQFCHWPCK…RYETGVCAYL (74 aa). 6 disulfide bridges follow: Cys-48/Cys-72, Cys-52/Cys-74, Cys-54/Cys-75, Cys-61/Cys-78, Cys-86/Cys-100, and Cys-92/Cys-114. The N-linked (GlcNAc...) asparagine glycan is linked to Asn-178. The region spanning 208 to 253 is the TSP type-1 domain; it reads KCLVQATKWTPCSRTCGMGISNRVTNENSNCEMRKEKRLCYIQPCD. Intrachain disulfides connect Cys-268-Cys-305, Cys-285-Cys-319, Cys-296-Cys-335, Cys-299-Cys-337, and Cys-304-Cys-341. The region spanning 268–342 is the CTCK domain; it reads CQPTFQLSKA…TSCVCQRNCR (75 aa). Residue Asn-308 is glycosylated (N-linked (GlcNAc...) asparagine).

The protein belongs to the CCN family. In terms of tissue distribution, predominant expression in adult kidney and testis and fetal kidney. Weaker expression found in placenta, ovary, prostate and small intestine. Also expressed in skeletally-derived cells such as synoviocytes and articular cartilage chondrocytes.

It is found in the secreted. The protein resides in the mitochondrion. In terms of biological role, plays a role in mitochondrial electron transport and mitochondrial respiration. Through its regulation of the mitochondrial function may play a role in normal postnatal skeletal growth and cartilage homeostasis. The protein is Cellular communication network factor 6 of Homo sapiens (Human).